Here is a 434-residue protein sequence, read N- to C-terminus: Alpha-enolase (434 aa).

Residue S40 coordinates Mg(2+). Substrate contacts are provided by H158 and E167. The Proton donor role is filled by E210. Positions 245, 293, and 318 each coordinate Mg(2+). Substrate contacts are provided by residues E293, D318, 370–373 (SHRS), and K394.

This sequence belongs to the enolase family. Homodimer. Requires Mg(2+) as cofactor.

It localises to the cytoplasm. The catalysed reaction is (2R)-2-phosphoglycerate = phosphoenolpyruvate + H2O. Its pathway is carbohydrate degradation; glycolysis; pyruvate from D-glyceraldehyde 3-phosphate: step 4/5. This chain is Alpha-enolase, found in Trachemys scripta elegans (Red-eared slider turtle).